The chain runs to 133 residues: Profilin-3 (133 aa).

Residues Cys-13 and Cys-117 are joined by a disulfide bond. The Involved in PIP2 interaction signature appears at 83-99; sequence AVIRGKKGSGGITIKKT. Thr-113 is modified (phosphothreonine).

Belongs to the profilin family. Occurs in many kinds of cells as a complex with monomeric actin in a 1:1 ratio. In terms of processing, phosphorylated by MAP kinases.

It is found in the cytoplasm. The protein localises to the cytoskeleton. In terms of biological role, binds to actin and affects the structure of the cytoskeleton. At high concentrations, profilin prevents the polymerization of actin, whereas it enhances it at low concentrations. In Corylus avellana (European hazel), this protein is Profilin-3.